Consider the following 158-residue polypeptide: Protein FAM177B (158 aa).

Residues 36–48 are compositionally biased toward acidic residues; that stretch reads EYSTEEEEEEEKE. The segment at 36 to 59 is disordered; sequence EYSTEEEEEEEKEEQSTNSTLDPS.

The protein belongs to the FAM177 family.

The sequence is that of Protein FAM177B (FAM177B) from Homo sapiens (Human).